The primary structure comprises 392 residues: Heavy metal-associated isoprenylated plant protein 6 (392 aa).

A compositionally biased stretch (basic and acidic residues) spans 1–19 (MGEKKEETATKPQGEKKPT). Positions 1 to 22 (MGEKKEETATKPQGEKKPTDGG) are disordered. Positions 23 to 86 (ITTVVMKLDM…KVADKIKRPV (64 aa)) constitute an HMA 1 domain. Positions 34 and 37 each coordinate Cd(2+). The disordered stretch occupies residues 89-157 (VSTVAPPKKE…PPPPKESTVV (69 aa)). Residues 106-145 (AEKKPSPAAEEKPAEKKPAAVEKPGEKKEEKKKEEGEKKA) show a composition bias toward basic and acidic residues. Residues 153–216 (ESTVVLKTKL…YLNEKLKRTV (64 aa)) form the HMA 2 domain. Cys-164 and Cys-167 together coordinate Cd(2+). The segment covering 258-270 (KKVDGGGEKKKEV) has biased composition (basic and acidic residues). Disordered stretches follow at residues 258-285 (KKVDGGGEKKKEVAVGGGGGGGGGGGDG) and 350-392 (GQGY…CSVM). Gly residues predominate over residues 272-285 (VGGGGGGGGGGGDG). Cys-389 carries the cysteine methyl ester modification. Cys-389 carries the S-farnesyl cysteine lipid modification. Residues 390–392 (SVM) constitute a propeptide, removed in mature form.

Belongs to the HIPP family. In terms of tissue distribution, expressed in petioles, hypocotyls, peduncles, vascular bundles and root meristems.

It is found in the cell membrane. Heavy-metal-binding protein. Involved in the maintenance of heavy metal homeostasis and/or in detoxification. The sequence is that of Heavy metal-associated isoprenylated plant protein 6 from Arabidopsis thaliana (Mouse-ear cress).